The sequence spans 168 residues: Ribulose bisphosphate carboxylase small subunit, chloroplastic (168 aa).

The N-terminal 28 residues, 1–28 (MASIAAKSVSLRAATRRAAPVAAPADAR), are a transit peptide targeting the chloroplast.

It belongs to the RuBisCO small chain family. As to quaternary structure, heterohexadecamer of 8 large and 8 small subunits.

It is found in the plastid. The protein localises to the chloroplast. Its function is as follows. RuBisCO catalyzes two reactions: the carboxylation of D-ribulose 1,5-bisphosphate, the primary event in carbon dioxide fixation, as well as the oxidative fragmentation of the pentose substrate. Both reactions occur simultaneously and in competition at the same active site. Although the small subunit is not catalytic it is essential for maximal activity. This is Ribulose bisphosphate carboxylase small subunit, chloroplastic from Chlamydomonas moewusii (Chlamydomonas eugametos).